The sequence spans 463 residues: Glycine--tRNA ligase (463 aa).

2 residues coordinate substrate: Arg-98 and Glu-174. ATP contacts are provided by residues 206–208 (RNE), 216–221 (FRTREF), 290–291 (EL), and 334–337 (GADR). 221–225 (FEQME) provides a ligand contact to substrate. 330 to 334 (EPSLG) lines the substrate pocket.

The protein belongs to the class-II aminoacyl-tRNA synthetase family. Homodimer.

It localises to the cytoplasm. It carries out the reaction tRNA(Gly) + glycine + ATP = glycyl-tRNA(Gly) + AMP + diphosphate. In terms of biological role, catalyzes the attachment of glycine to tRNA(Gly). This Staphylococcus aureus (strain Mu50 / ATCC 700699) protein is Glycine--tRNA ligase.